The sequence spans 125 residues: Small ribosomal subunit protein uS12 (125 aa).

The tract at residues 1–28 is disordered; the sequence is MPTISQLIGSERKRLTRKTKSPALKSCP. The residue at position 89 (aspartate 89) is a 3-methylthioaspartic acid. The interval 104-125 is disordered; sequence TAGVKDRRQSRSKYGAKAPKND.

It belongs to the universal ribosomal protein uS12 family. As to quaternary structure, part of the 30S ribosomal subunit. Contacts proteins S8 and S17. May interact with IF1 in the 30S initiation complex.

Its function is as follows. With S4 and S5 plays an important role in translational accuracy. Interacts with and stabilizes bases of the 16S rRNA that are involved in tRNA selection in the A site and with the mRNA backbone. Located at the interface of the 30S and 50S subunits, it traverses the body of the 30S subunit contacting proteins on the other side and probably holding the rRNA structure together. The combined cluster of proteins S8, S12 and S17 appears to hold together the shoulder and platform of the 30S subunit. The chain is Small ribosomal subunit protein uS12 from Prochlorococcus marinus subsp. pastoris (strain CCMP1986 / NIES-2087 / MED4).